Consider the following 952-residue polypeptide: Protein translocase subunit SecA (952 aa).

Residues glutamine 135, 153–157, and aspartate 575 each bind ATP; that span reads GEGKT. Positions 614–624 are enriched in basic and acidic residues; sequence RHESRRIDNQL. Disordered stretches follow at residues 614 to 636 and 916 to 946; these read RHESRRIDNQLRGRSGRQGDPGS and VSAKAATQSTTPAAKEIGRNDPCPCGSGKKY. 4 residues coordinate Zn(2+): cysteine 938, cysteine 940, cysteine 949, and cysteine 950.

Belongs to the SecA family. As to quaternary structure, monomer and homodimer. Part of the essential Sec protein translocation apparatus which comprises SecA, SecYEG and auxiliary proteins SecDF. Other proteins may also be involved. Zn(2+) is required as a cofactor.

The protein localises to the cell membrane. The protein resides in the cytoplasm. The enzyme catalyses ATP + H2O + cellular proteinSide 1 = ADP + phosphate + cellular proteinSide 2.. In terms of biological role, part of the Sec protein translocase complex. Interacts with the SecYEG preprotein conducting channel. Has a central role in coupling the hydrolysis of ATP to the transfer of proteins into and across the cell membrane, serving as an ATP-driven molecular motor driving the stepwise translocation of polypeptide chains across the membrane. The sequence is that of Protein translocase subunit SecA from Dehalococcoides mccartyi (strain ATCC BAA-2100 / JCM 16839 / KCTC 5957 / BAV1).